The chain runs to 365 residues: UDP-N-acetylglucosamine--N-acetylmuramyl-(pentapeptide) pyrophosphoryl-undecaprenol N-acetylglucosamine transferase (365 aa).

UDP-N-acetyl-alpha-D-glucosamine contacts are provided by residues 17-19 (TGG), asparagine 129, arginine 167, serine 194, isoleucine 250, 269-274 (ALTVSE), and glutamine 295.

It belongs to the glycosyltransferase 28 family. MurG subfamily.

The protein localises to the cell inner membrane. The catalysed reaction is di-trans,octa-cis-undecaprenyl diphospho-N-acetyl-alpha-D-muramoyl-L-alanyl-D-glutamyl-meso-2,6-diaminopimeloyl-D-alanyl-D-alanine + UDP-N-acetyl-alpha-D-glucosamine = di-trans,octa-cis-undecaprenyl diphospho-[N-acetyl-alpha-D-glucosaminyl-(1-&gt;4)]-N-acetyl-alpha-D-muramoyl-L-alanyl-D-glutamyl-meso-2,6-diaminopimeloyl-D-alanyl-D-alanine + UDP + H(+). Its pathway is cell wall biogenesis; peptidoglycan biosynthesis. In terms of biological role, cell wall formation. Catalyzes the transfer of a GlcNAc subunit on undecaprenyl-pyrophosphoryl-MurNAc-pentapeptide (lipid intermediate I) to form undecaprenyl-pyrophosphoryl-MurNAc-(pentapeptide)GlcNAc (lipid intermediate II). This is UDP-N-acetylglucosamine--N-acetylmuramyl-(pentapeptide) pyrophosphoryl-undecaprenol N-acetylglucosamine transferase from Shewanella piezotolerans (strain WP3 / JCM 13877).